Reading from the N-terminus, the 143-residue chain is Transcriptional regulator MraZ (143 aa).

2 consecutive SpoVT-AbrB domains span residues 5–47 (EYRH…PQSE) and 76–119 (ASEC…SKTL).

Belongs to the MraZ family. In terms of assembly, forms oligomers.

It localises to the cytoplasm. The protein localises to the nucleoid. The protein is Transcriptional regulator MraZ of Shouchella clausii (strain KSM-K16) (Alkalihalobacillus clausii).